A 163-amino-acid polypeptide reads, in one-letter code: Ribosome maturation factor RimP (163 aa).

This sequence belongs to the RimP family.

It localises to the cytoplasm. Its function is as follows. Required for maturation of 30S ribosomal subunits. The protein is Ribosome maturation factor RimP of Streptococcus thermophilus (strain CNRZ 1066).